We begin with the raw amino-acid sequence, 150 residues long: Deoxyuridine 5'-triphosphate nucleotidohydrolase (150 aa).

Residues 69 to 71, Asn-82, 86 to 88, and Met-96 each bind substrate; these read RSG and LID.

Belongs to the dUTPase family. Requires Mg(2+) as cofactor.

It carries out the reaction dUTP + H2O = dUMP + diphosphate + H(+). Its pathway is pyrimidine metabolism; dUMP biosynthesis; dUMP from dCTP (dUTP route): step 2/2. Functionally, this enzyme is involved in nucleotide metabolism: it produces dUMP, the immediate precursor of thymidine nucleotides and it decreases the intracellular concentration of dUTP so that uracil cannot be incorporated into DNA. In Leptothrix cholodnii (strain ATCC 51168 / LMG 8142 / SP-6) (Leptothrix discophora (strain SP-6)), this protein is Deoxyuridine 5'-triphosphate nucleotidohydrolase.